Here is a 588-residue protein sequence, read N- to C-terminus: Juvenile hormone esterase (588 aa).

Positions 1-23 are cleaved as a signal peptide; sequence MKFPKNLFLVLFYTSWKFCDVCA. Asn79 and Asn83 each carry an N-linked (GlcNAc...) asparagine glycan. The cysteines at positions 91 and 109 are disulfide-linked. The Acyl-ester intermediate role is filled by Ser214. N-linked (GlcNAc...) asparagine glycosylation is present at Asn257. Cys268 and Cys281 are disulfide-bonded. The active-site Charge relay system is the Glu350. N-linked (GlcNAc...) asparagine glycans are attached at residues Asn389, Asn396, and Asn472. His479 (charge relay system) is an active-site residue.

Belongs to the type-B carboxylesterase/lipase family.

Its subcellular location is the secreted. It catalyses the reaction juvenile hormone III + H2O = juvenile hormone III carboxylate + methanol + H(+). Its activity is regulated as follows. Inhibited by 3-octylthio-1,1,1-trifluoro-2-propanone (OTFP), a specific inhibitor of juvenile hormone esterase (JHE), but not by diisopropyl fluorophosphate (DFP), a serine enzyme inhibitor. In terms of biological role, may function as a juvenile hormone (JH)-specific degradation enzyme in vivo decreasing JH activity. Hydrolyzes JH III in vitro. Hydrolyzes effectively also methyl hepthylthioacetothioate (HEPTAT), a synthetic substrate. Of the general esterase substrates, it has preference for 2-naphthyl acetate (2-NA) and shows a weak activity for 1-NA and 4-nitrophenylacetate (4-NPA). The polypeptide is Juvenile hormone esterase (Tribolium castaneum (Red flour beetle)).